The sequence spans 242 residues: Coiled-coil domain-containing protein 107 (242 aa).

Residues 1-24 (MEGAGPVLSILGLLLVSAPFGVLG) form the signal peptide. Residues 27–62 (PSADLGAHPERGSQVSPGTTEPRRQPPPKDQRERAR) form a disordered region. Basic and acidic residues predominate over residues 47 to 62 (EPRRQPPPKDQRERAR). Residues 65–85 (SLSLGALYTAAVVAFVLFKCL) form a helical membrane-spanning segment. A coiled-coil region spans residues 97 to 132 (EKNKKKSSQSEQQLVQLTQQLAQTEQHLNHLMTQLD). A disordered region spans residues 186–210 (KEDQEAGNSQAWEEPITWSPETRNL).

The protein localises to the membrane. The chain is Coiled-coil domain-containing protein 107 (Ccdc107) from Mus musculus (Mouse).